A 378-amino-acid chain; its full sequence is Alginate lyase (378 aa).

An N-terminal signal peptide occupies residues 1-28; sequence MQTPKLIRPTLLSMAIVSSMAWATGASA. Substrate-binding positions include 67-68, 140-141, and Tyr258; these read SK and HT.

It belongs to the polysaccharide lyase 5 family.

Its subcellular location is the periplasm. The enzyme catalyses Eliminative cleavage of alginate to give oligosaccharides with 4-deoxy-alpha-L-erythro-hex-4-enuronosyl groups at their non-reducing ends and beta-D-mannuronate at their reducing end.. Catalyzes the depolymerization of alginate by cleaving the beta-1,4 glycosidic bond between two adjacent sugar residues via a beta-elimination mechanism. May serve to degrade mislocalized alginate that is trapped in the periplasmic space. This Pseudomonas syringae pv. tomato (strain ATCC BAA-871 / DC3000) protein is Alginate lyase.